We begin with the raw amino-acid sequence, 158 residues long: MSANRIAVLRGDNVSGIIRFKQEKEGSPTTISGEIKGLTPGLHGFHVHQYGDTTNGCISAGPHFNPYNKTHGGPTDEMRHVGDLGNIVAGADGTAHIDISDKHVQLLGPNSIIGRSLVVHADQDDLGKGVGDKKDESLKTGNAGARVACGIVAVSAAS.

3 residues coordinate Cu cation: H46, H48, and H63. C57 and C149 form a disulfide bridge. Residues H63, H71, H80, and D83 each contribute to the Zn(2+) site. H120 contacts Cu cation.

The protein belongs to the Cu-Zn superoxide dismutase family. Homodimer. It depends on Cu cation as a cofactor. The cofactor is Zn(2+).

Its subcellular location is the cytoplasm. The catalysed reaction is 2 superoxide + 2 H(+) = H2O2 + O2. Its function is as follows. Destroys radicals which are normally produced within the cells and which are toxic to biological systems. The polypeptide is Superoxide dismutase [Cu-Zn] (SODC) (Brugia pahangi (Filarial nematode worm)).